The following is a 483-amino-acid chain: Coagulation factor X isoform 1 (483 aa).

A signal peptide spans 1-20 (MAPQLLLCLILTFLWSLPEA). Positions 21–40 (ESNVFLKSKVANRFLQRTKR) are excised as a propeptide. A Gla domain is found at 41-86 (ANSLFEEFKSGNIERECIEERCSKEEAREAFEDDEKTETFWNVYVD). Glu-46, Glu-47, Glu-54, Glu-56, Glu-59, Glu-60, Glu-65, Glu-66, Glu-69, Glu-72, and Glu-75 each carry 4-carboxyglutamate. An intrachain disulfide couples Cys-57 to Cys-62. Residues 86 to 122 (DGDQCSSNPCHYGGTCKDGIGSYTCTCLSGYEGKNCE) enclose the EGF-like 1; calcium-binding domain. 11 disulfides stabilise this stretch: Cys-90-Cys-101, Cys-95-Cys-110, Cys-112-Cys-121, Cys-129-Cys-140, Cys-136-Cys-149, Cys-151-Cys-164, Cys-172-Cys-345, Cys-245-Cys-250, Cys-265-Cys-281, Cys-393-Cys-407, and Cys-418-Cys-446. Ser-92 carries O-linked (Hex...) serine glycosylation. Asp-103 carries the post-translational modification (3R)-3-hydroxyaspartate. One can recognise an EGF-like 2 domain in the interval 125-165 (LYKSCRVDNGDCWHFCKPVQNGIQCSCAESYLLGEDGHSCV). A propeptide spans 183–238 (EANLPDFQTDFSDDYDEIDENNFVETPTNFSGLVLTVQSQNATLLKKSDNPSPDIR) (activation peptide). A Peptidase S1 domain is found at 239–470 (VVNGTDCKLG…FILWIKRIIR (232 aa)). His-280 (charge relay system) is an active-site residue. Asn-283 is a glycosylation site (N-linked (GlcNAc...) asparagine). Residue Asp-325 is the Charge relay system of the active site. The Charge relay system role is filled by Ser-422.

It belongs to the peptidase S1 family. As to quaternary structure, heterodimer of a light chain and a heavy chain; disulfide-linked. Gamma-carboxyglutamate residues are formed by vitamin K dependent carboxylation. These residues are essential for the binding of calcium. In terms of processing, the activation peptide is cleaved by factor IXa (in the intrinsic pathway), or by factor VIIa (in the extrinsic pathway). Post-translationally, the iron and 2-oxoglutarate dependent 3-hydroxylation of aspartate and asparagine is (R) stereospecific within EGF domains. Plasma; synthesized in the liver.

The protein resides in the secreted. The catalysed reaction is Selective cleavage of Arg-|-Thr and then Arg-|-Ile bonds in prothrombin to form thrombin.. Factor Xa is a vitamin K-dependent glycoprotein that converts prothrombin to thrombin in the presence of factor Va, calcium and phospholipid during blood clotting. In Pseudonaja textilis (Eastern brown snake), this protein is Coagulation factor X isoform 1 (F10).